The chain runs to 414 residues: Eukaryotic initiation factor 4A (414 aa).

The Q motif signature appears at 41–69; that stretch reads ESFDDMGLQENLLRGIYAYGFEKPSAIQQ. The 171-residue stretch at 72-242 folds into the Helicase ATP-binding domain; sequence IVPFCKGLDV…RKFMNKPVRI (171 aa). 85–92 is a binding site for ATP; that stretch reads AQSGTGKT. A DEAD box motif is present at residues 190-193; the sequence is DEAD. The Helicase C-terminal domain occupies 253–414; sequence GIKQFYVNVE…ELPANVADLL (162 aa).

Belongs to the DEAD box helicase family. eIF4A subfamily. In terms of assembly, eIF4F is a multi-subunit complex, the composition of which varies with external and internal environmental conditions. It is composed of at least EIF4A, EIF4E and EIF4G.

It carries out the reaction ATP + H2O = ADP + phosphate + H(+). Functionally, ATP-dependent RNA helicase which is a subunit of the eIF4F complex involved in cap recognition and is required for mRNA binding to ribosome. In the current model of translation initiation, eIF4A unwinds RNA secondary structures in the 5'-UTR of mRNAs which is necessary to allow efficient binding of the small ribosomal subunit, and subsequent scanning for the initiator codon. The sequence is that of Eukaryotic initiation factor 4A from Triticum aestivum (Wheat).